The primary structure comprises 119 residues: Large ribosomal subunit protein bL20 (119 aa).

The protein belongs to the bacterial ribosomal protein bL20 family.

Its function is as follows. Binds directly to 23S ribosomal RNA and is necessary for the in vitro assembly process of the 50S ribosomal subunit. It is not involved in the protein synthesizing functions of that subunit. The protein is Large ribosomal subunit protein bL20 of Bradyrhizobium sp. (strain ORS 278).